The sequence spans 590 residues: Laccase-19 (590 aa).

Residues 1 to 28 (MEKLSMVTSLLCAITVAVLAVAVVSGEA) form the signal peptide. 2 consecutive Plastocyanin-like domains span residues 36-152 (VVHE…PRDG) and 161-315 (KDVP…YAGT). N-linked (GlcNAc...) asparagine glycans are attached at residues asparagine 41 and asparagine 47. Residues histidine 86 and histidine 88 each coordinate Cu cation. Asparagine 120 carries N-linked (GlcNAc...) asparagine glycosylation. 2 residues coordinate Cu cation: histidine 131 and histidine 133. Asparagine 205, asparagine 344, asparagine 378, asparagine 397, asparagine 434, and asparagine 465 each carry an N-linked (GlcNAc...) asparagine glycan. In terms of domain architecture, Plastocyanin-like 3 spans 424 to 566 (DFPIRPPRPF…ATAFIVEDGP (143 aa)). Cu cation contacts are provided by asparagine 483, histidine 486, histidine 488, histidine 545, cysteine 546, histidine 547, histidine 551, and methionine 556. Residues 565-590 (GPTPETSLPPPPPEFKRCGNNGLSQP) are disordered.

Belongs to the multicopper oxidase family. Cu cation is required as a cofactor.

Its subcellular location is the secreted. It is found in the extracellular space. It localises to the apoplast. The catalysed reaction is 4 hydroquinone + O2 = 4 benzosemiquinone + 2 H2O. Its function is as follows. Lignin degradation and detoxification of lignin-derived products. The sequence is that of Laccase-19 (LAC19) from Oryza sativa subsp. japonica (Rice).